The sequence spans 876 residues: Alanine--tRNA ligase (876 aa).

Lys74 bears the N6-acetyllysine mark. Residues His564, His568, Cys666, and His670 each contribute to the Zn(2+) site.

Belongs to the class-II aminoacyl-tRNA synthetase family. As to quaternary structure, homotetramer. Zn(2+) serves as cofactor.

It localises to the cytoplasm. The enzyme catalyses tRNA(Ala) + L-alanine + ATP = L-alanyl-tRNA(Ala) + AMP + diphosphate. Its function is as follows. Catalyzes the attachment of alanine to tRNA(Ala) in a two-step reaction: alanine is first activated by ATP to form Ala-AMP and then transferred to the acceptor end of tRNA(Ala). Also edits incorrectly charged Ser-tRNA(Ala) and Gly-tRNA(Ala) via its editing domain. This chain is Alanine--tRNA ligase, found in Escherichia coli O157:H7.